Reading from the N-terminus, the 483-residue chain is Myocilin (483 aa).

A signal peptide spans 1 to 18; sequence MPTAQLLLLACLLWGLEA. Residue Asn43 is glycosylated (N-linked (GlcNAc...) asparagine). Residues 51-162 adopt a coiled-coil conformation; sequence GQAMSAIQDL…SQEVARLRRG (112 aa). The disordered stretch occupies residues 153-179; sequence SQEVARLRRGQCPQAHSSSQDVPAGSR. The region spanning 223–482 is the Olfactomedin-like domain; the sequence is GCGELVWVGE…MVTYDIRLSK (260 aa). A disulfide bridge connects residues Cys224 and Cys412. Ca(2+) contacts are provided by Asp359, Asn407, Ala408, Ile456, and Asp457. The Microbody targeting signal motif lies at 481–483; that stretch reads SKM.

Homodimer (via N-terminus). Can also form higher oligomers. Interacts with OLFM3, FN1, NRCAM, GLDN and NFASC. Interacts (via N-terminus) with MYL2. Interacts with SFRP1, FRZB, FZD7, FZD10, FZD1 and WIF1; regulates Wnt signaling. Interacts with SNTA1; regulates muscle hypertrophy. Interacts with ERBB2 and ERBB3; activates ERBB2-ERBB3 signaling pathway. Interacts with SNCG; affects its secretion and its aggregation. Post-translationally, N-glycosylated. Palmitoylated. In terms of processing, undergoes a calcium-dependent proteolytic cleavage at Arg-205 by CAPN2 in the endoplasmic reticulum. The result is the production of two fragments, one of 35 kDa containing the C-terminal olfactomedin-like domain, and another of 20 kDa containing the N-terminal leucine zipper-like domain. In terms of tissue distribution, expressed in optic nerve head, ciliary body and retina.

Its subcellular location is the secreted. It is found in the golgi apparatus. The protein resides in the cytoplasmic vesicle. The protein localises to the extracellular space. It localises to the extracellular matrix. Its subcellular location is the extracellular exosome. It is found in the mitochondrion. The protein resides in the mitochondrion intermembrane space. The protein localises to the mitochondrion inner membrane. It localises to the mitochondrion outer membrane. Its subcellular location is the rough endoplasmic reticulum. It is found in the cell projection. The protein resides in the cilium. The protein localises to the endoplasmic reticulum. In terms of biological role, secreted glycoprotein regulating the activation of different signaling pathways in adjacent cells to control different processes including cell adhesion, cell-matrix adhesion, cytoskeleton organization and cell migration. Promotes substrate adhesion, spreading and formation of focal contacts. Negatively regulates cell-matrix adhesion and stress fiber assembly through Rho protein signal transduction. Modulates the organization of actin cytoskeleton by stimulating the formation of stress fibers through interactions with components of Wnt signaling pathways. Promotes cell migration through activation of PTK2 and the downstream phosphatidylinositol 3-kinase signaling. Plays a role in bone formation and promotes osteoblast differentiation in a dose-dependent manner through mitogen-activated protein kinase signaling. Mediates myelination in the peripheral nervous system through ERBB2/ERBB3 signaling. Plays a role as a regulator of muscle hypertrophy through the components of dystrophin-associated protein complex. Involved in positive regulation of mitochondrial depolarization. Plays a role in neurite outgrowth. May participate in the obstruction of fluid outflow in the trabecular meshwork. The protein is Myocilin (MYOC) of Canis lupus familiaris (Dog).